A 620-amino-acid chain; its full sequence is 1-deoxy-D-xylulose-5-phosphate synthase (620 aa).

Residues His-80 and 121–123 (GHS) contribute to the thiamine diphosphate site. Asp-152 contributes to the Mg(2+) binding site. Thiamine diphosphate contacts are provided by residues 153–154 (GA), Asn-181, Tyr-288, and Glu-370. Asn-181 provides a ligand contact to Mg(2+).

Belongs to the transketolase family. DXPS subfamily. Homodimer. Mg(2+) is required as a cofactor. Thiamine diphosphate serves as cofactor.

The enzyme catalyses D-glyceraldehyde 3-phosphate + pyruvate + H(+) = 1-deoxy-D-xylulose 5-phosphate + CO2. It participates in metabolic intermediate biosynthesis; 1-deoxy-D-xylulose 5-phosphate biosynthesis; 1-deoxy-D-xylulose 5-phosphate from D-glyceraldehyde 3-phosphate and pyruvate: step 1/1. Its function is as follows. Catalyzes the acyloin condensation reaction between C atoms 2 and 3 of pyruvate and glyceraldehyde 3-phosphate to yield 1-deoxy-D-xylulose-5-phosphate (DXP). In Klebsiella pneumoniae subsp. pneumoniae (strain ATCC 700721 / MGH 78578), this protein is 1-deoxy-D-xylulose-5-phosphate synthase.